A 281-amino-acid chain; its full sequence is Carbonic anhydrase (281 aa).

Zn(2+)-binding residues include Cys-106, His-161, and Cys-164.

The protein belongs to the beta-class carbonic anhydrase family. The cofactor is Zn(2+).

It localises to the cytoplasm. The protein localises to the nucleus. The protein resides in the mitochondrion intermembrane space. The enzyme catalyses hydrogencarbonate + H(+) = CO2 + H2O. With respect to regulation, amines and amino acids act as activators of catalytic activity, whereas natural product-based phenols, dithiocarbamates, aliphatic and aromatic carboxylates, boronic acids, and sulfonamides act as inhibitors of enzymatic activity. Also inhibited by anions such as cyanide and carbonate, and to a lesser extent by sulfate, phenylboronic, and phenyl arsonic acid. Functionally, catalyzes the reversible hydration of CO(2) to H(2)CO(3). The main role may be to provide inorganic carbon for the bicarbonate-dependent carboxylation reactions catalyzed by pyruvate carboxylase, acetyl-CoA carboxylase and carbamoyl-phosphate synthetase. Involved in protection against oxidative damage. Acts as a CO(2) chemosensor and induces CO(2)-mediated filamentation. Essential for pathological growth in niches where sufficient CO(2) is not supplied by the host. Necessary for white-to-opaque switching at low CO(2) concentrations. In Candida albicans (strain SC5314 / ATCC MYA-2876) (Yeast), this protein is Carbonic anhydrase (NCE103).